The sequence spans 221 residues: Molybdenum cofactor guanylyltransferase (221 aa).

GTP is bound by residues 18-20 (IAG), lysine 35, asparagine 63, aspartate 81, and aspartate 112. Residue aspartate 112 coordinates Mg(2+).

It belongs to the MobA family. Monomer. Requires Mg(2+) as cofactor.

The protein localises to the cytoplasm. It carries out the reaction Mo-molybdopterin + GTP + H(+) = Mo-molybdopterin guanine dinucleotide + diphosphate. In terms of biological role, transfers a GMP moiety from GTP to Mo-molybdopterin (Mo-MPT) cofactor (Moco or molybdenum cofactor) to form Mo-molybdopterin guanine dinucleotide (Mo-MGD) cofactor. The sequence is that of Molybdenum cofactor guanylyltransferase from Brucella abortus (strain S19).